The following is a 326-amino-acid chain: Septum site-determining protein minD homolog, chloroplastic (326 aa).

Residues 1-62 (MASLRLFSTN…LAGETPRIVV (62 aa)) constitute a chloroplast transit peptide. 67–74 (KGGVGKTT) serves as a coordination point for ATP.

This sequence belongs to the ParA family. MinD subfamily. In terms of assembly, homodimer. Interacts with MINE1. Binds to ARC3. Interacts with MCD1. Interacts with CDP1/PARC6.

The protein localises to the plastid. It is found in the chloroplast inner membrane. Stimulated ATPase activity by MINE1. Together with ARC3 and MCD1, regulates FtsZ ring positioning in chloroplasts in an ARC6-dependent manner. Calcium-dependent ATPase required for the correct placement of the plastid division site. Inhibits FtsZ filament and ring formation in the plastid. Mediates inhibition of plastid division. In cooperation with MINE1, prevents FtsZ ring formation anywhere outside of the mid-plastids. This chain is Septum site-determining protein minD homolog, chloroplastic, found in Arabidopsis thaliana (Mouse-ear cress).